Reading from the N-terminus, the 169-residue chain is uncharacterized protein (169 aa).

The chain crosses the membrane as a helical span at residues 97–117; sequence IVIFCILVIVAFVIWLVVWLF. A disordered region spans residues 137-169; the sequence is NYSGLPTPQPTPTHYPAEQYSYDPARDRDNYRY. Basic and acidic residues predominate over residues 160–169; sequence PARDRDNYRY.

Its subcellular location is the membrane. This is an uncharacterized protein from Caenorhabditis elegans.